The chain runs to 517 residues: RNA-binding region-containing protein 3 (517 aa).

The tract at residues 1-26 is disordered; it reads MAAPEQPLAISRGCTSSSSLSPPRGD. At S21 the chain carries Phosphoserine. The region spanning 27-102 is the RRM 1 domain; that stretch reads RTLLVRHLPA…HTLVVEFAKE (76 aa). Disordered stretches follow at residues 106–130 and 213–254; these read VHSPCPTSGSEKKKRSDDPVEDDKE and MPLH…DEDR. S108 carries the phosphoserine modification. Residues 115-130 show a composition bias toward basic and acidic residues; the sequence is SEKKKRSDDPVEDDKE. The span at 217–230 shows a compositional bias: pro residues; the sequence is APLPPTSPQPPEEP. Residues 231-252 are compositionally biased toward acidic residues; the sequence is PLPEEDEELSSEESEYESTDDE. The 84-residue stretch at 420 to 503 folds into the RRM 2 domain; sequence CRIYVKNLAK…KPMVVQFARS (84 aa).

Component of the U11/U12 snRNPs that are part of the U12-type spliceosome. Found in a complex with m(7)G-capped U12 snRNA. Interacts with PDCD7.

The protein localises to the nucleus. Participates in pre-mRNA U12-dependent splicing, performed by the minor spliceosome which removes U12-type introns. U12-type introns comprises less than 1% of all non-coding sequences. Binds to the 3'-stem-loop of m(7)G-capped U12 snRNA. This chain is RNA-binding region-containing protein 3 (RNPC3), found in Pongo abelii (Sumatran orangutan).